Here is a 601-residue protein sequence, read N- to C-terminus: Uptake hydrogenase large subunit (601 aa).

4 residues coordinate Ni(2+): C74, C77, C580, and C583.

Belongs to the [NiFe]/[NiFeSe] hydrogenase large subunit family. As to quaternary structure, heterodimer of a large and a small subunit. It depends on Ni(2+) as a cofactor.

The protein localises to the cell membrane. The catalysed reaction is H2 + A = AH2. Functionally, this enzyme recycles the H(2) produced by nitrogenase to increase the production of ATP and to protect nitrogenase against inhibition or damage by O(2) under carbon- or phosphate-limited conditions. This chain is Uptake hydrogenase large subunit (hupL), found in Azotobacter chroococcum mcd 1.